Consider the following 196-residue polypeptide: Calcium channel flower (196 aa).

The next 3 helical transmembrane spans lie at 36–56 (LGIV…LSII), 67–89 (IIQM…ICIE), and 114–134 (AVPP…GLIF).

This sequence belongs to the calcium channel flower family. As to quaternary structure, homomultimer. Associates with the dally/ magu complex.

It localises to the cell membrane. The protein localises to the cytoplasmic vesicle. It is found in the secretory vesicle. The protein resides in the synaptic vesicle membrane. Its subcellular location is the presynaptic cell membrane. It localises to the endosome. Its activity is regulated as follows. Channel activity is inhibited by La(3+), which reduces Ca(2+) influx and thus inhibits it's function in promoting activity-dependent bulk endocytosis (ADBE) in response to high stimuli. In terms of biological role, transmembrane protein which mediates synaptic endocytosis, fitness-based cell culling, neuronal culling, morphogen gradient scaling, and calcium transport. Regulates synaptic endocytosis and hence couples exo- with endocytosis. Controls two major modes of synaptic vesicle (SV) endocytosis in the synaptic boutons of neuromuscular junctions (NMJs); Ca(2+) channel-independent Clathrin-mediated endocytosis (CME) in response to mild stimulation, and Ca(2+) channel-dependent activity-dependent bulk endocytosis (ADBE) in response to strong stimulation. Functions in ADBE and subsequent SV reformation from bulk endosomes by initiating Ca(2+) channel-dependent phosphatidylinositol 4,5-bisphosphate (PtdIns(4,5)P2) compartmentalization in synaptic boutons. There it acts at the periactive zone to provide the low Ca(2+) levels required to initiate Calcineurin activation and upregulate PtdIns(4,5)P2. Conversely PtdIns(4,5)P2 enhances fwe Ca(2+) channel-activity, establishing a positive feedback loop that induces PtdIns(4,5)P2 microdomain at the periactive zone. These microdomains trigger bulk membrane invagination (i.e. ADBE) by triggering actin polymerization while also promoting localization of fwe to bulk endosomes, thereby removing the ADBE trigger to reduce endocytosis and prevent excess membrane uptake. PtdIns(4,5)P2 then promotes SV reformation from the bulk endosomes, to coordinate ADBE and subsequent SV reformation. Different combinations of the flower isoforms at the cell membrane are also required for the identification and elimination of suboptimal or supernumerary cells during development, regeneration, and adulthood. Required for the recognition and elimination of unfit cells in the developing wing during cell competition. In the developing pupal retina, mediates the elimination of unwanted postmitotic neurons, including supernumerary photoreceptor neurons that form at the periphery of the retina and are contained within incomplete ommatidia units. Also required for efficient elimination and replacement of old neurons by newly generated neurons during regeneration in the adult brain following mechanical injury. Downstream of the flower fitness fingerprints, cells identified as unwanted or unfit are eliminated via apoptosis through the expression of ahuizotl (azot). However, the cells marked for elimination by the flower isoforms only undergo apoptosis if additional thresholds are met; (1) their neighboring fit/healthy cells express different levels of the fwe isoforms, and (2) the levels of the protective signal SPARC expressed by the loser or unwanted cells are unable to inhibit caspase activation. These additional thresholds for flower-mediated apoptosis, allows useful cells to recover from transient and limited stress before they are unnecessarily eliminated. Functions with dally and magu in a mechanism of scaling, which utilises apoptosis to ensure that the dpp morphogen gradient, which mediates organ growth, remains proportional to the size of the growing wing. In this mechanism, fwe represses dally- and Magu-dependent activity in expanding the gradient, and dally/Magu inhibits fwe-dependent apoptosis to keep cell death rate low. When the levels of these different proteins are optimally regulated the gradient correctly scales with organ growth but when this fails, fwe-mediated apoptosis is activated to trim the developing tissue to match the correct size of the gradient. This is Calcium channel flower from Drosophila virilis (Fruit fly).